An 87-amino-acid polypeptide reads, in one-letter code: Large ribosomal subunit protein bL27 (87 aa).

Positions Met-1 to Leu-21 are disordered.

Belongs to the bacterial ribosomal protein bL27 family.

The chain is Large ribosomal subunit protein bL27 from Amoebophilus asiaticus (strain 5a2).